Reading from the N-terminus, the 727-residue chain is Synaptic vesicle glycoprotein 2C (727 aa).

The segment at 1–57 (MEDSYKDRTSLMKGAKDIAKEVKKQTVKKVNQAVDRAQDEYTQRSYSRFQDEDDDDD) is interaction with SYT1. Residues 1–154 (MEDSYKDRTS…CGHGRFQWAL (154 aa)) lie on the Cytoplasmic side of the membrane. The disordered stretch occupies residues 22-120 (VKKQTVKKVN…QPKGDEYKDR (99 aa)). Ser-75 and Ser-76 each carry phosphoserine. Thr-79 carries the phosphothreonine modification. A helical transmembrane segment spans residues 155 to 175 (FFVLGMALMADGVEVFVVGFV). Topologically, residues 176–191 (LPSAETDLCIPNSGSG) are extracellular. The helical transmembrane segment at 192-212 (WLGSIVYLGMMVGAFFWGGLA) threads the bilayer. Residues 213–226 (DKVGRKQSLLICMS) are Cytoplasmic-facing. The helical transmembrane segment at 227 to 247 (VNGFFAFLSSFVQGYGFFLLC) threads the bilayer. Position 248 (Arg-248) is a topological domain, extracellular. The helical transmembrane segment at 249–269 (LLSGFGIGGAIPTVFSYFAEV) threads the bilayer. The Cytoplasmic portion of the chain corresponds to 270–280 (LAREKRGEHLS). Residues 281-301 (WLCMFWMIGGIYASAMAWAII) form a helical membrane-spanning segment. Residues 302–320 (PHYGWSFSMGSAYQFHSWR) lie on the Extracellular side of the membrane. A helical membrane pass occupies residues 321–341 (VFVIVCALPCVSSVVALTFMP). The Cytoplasmic portion of the chain corresponds to 342 to 437 (ESPRFLLEVG…PVRENTIKLT (96 aa)). Residues 438-458 (IVWFTLSFGYYGLSVWFPDVI) form a helical membrane-spanning segment. Residues 459–578 (KHLQSDEYAL…CQITFDDDYS (120 aa)) lie on the Extracellular side of the membrane. Tyr-466 carries the phosphotyrosine modification. 5 N-linked (GlcNAc...) asparagine glycosylation sites follow: Asn-480, Asn-484, Asn-534, Asn-559, and Asn-565. The interval 529 to 566 (NTYFKNCTFIDTLFENTDFEPYKFIDSEFQNCSFLHNK) is (Microbial infection) C.botulinum neurotoxin type A-binding. A helical transmembrane segment spans residues 579–599 (AYWIYFVNFLGTLAVLPGNIV). Over 600–609 (SALLMDRIGR) the chain is Cytoplasmic. Residues 610–630 (LTMLGGSMVLSGISCFFLWFG) form a helical membrane-spanning segment. Residues 631–636 (TSESMM) are Extracellular-facing. A helical transmembrane segment spans residues 637–657 (IGMLCLYNGLTISAWNSLDVV). Residues 658–670 (TVELYPTDRRATG) are Cytoplasmic-facing. Residues 671-693 (FGFLNALCKAAAVLGNLIFGSLV) form a helical membrane-spanning segment. Topologically, residues 694-697 (SITK) are extracellular. A helical membrane pass occupies residues 698–716 (AIPILLASTVLVCGGLVGL). Residues 717 to 727 (RLPDTRTQVLM) lie on the Cytoplasmic side of the membrane.

The protein belongs to the major facilitator superfamily. As to quaternary structure, interacts with SYT1 in a calcium-dependent manner. In terms of assembly, (Microbial infection) Interacts with C.botulinum neurotoxin type A (BoNT/A, botA). (Microbial infection) Interacts with C.botulinum neurotoxin type F (BoNT/F). Interaction requires glycosylation of SV2 proteins. In terms of processing, N-glycosylated. As to expression, expressed at high levels in very few brain areas including the striatum, midbrain and hindbrain, and in the olfactory bulb. Expressed at lower levels in cerebrum, hippocampus and cerebellum (at protein level). Mainly expressed in brain; also detected in lung, liver, kidney.

The protein localises to the cytoplasmic vesicle. The protein resides in the secretory vesicle. It is found in the synaptic vesicle membrane. In terms of biological role, plays a role in the control of regulated secretion in neural and endocrine cells, enhancing selectively low-frequency neurotransmission. Positively regulates vesicle fusion by maintaining the readily releasable pool of secretory vesicles. (Microbial infection) Receptor for C.botulinum neurotoxin type A (BoNT/A, botA); the toxin binds Sv2c via extracellular loop 4. Restores uptake of BoNT/A in rat cells that are deleted for SV2 receptor. Its function is as follows. (Microbial infection) Possible receptor for C.botulinum neurotoxin type D (BoNT/D, botD); BoNT/D does not bind to extracellular loop 4 as do BoNT/A and BoNT/E. Another group does not find a convincing interaction with SV2. Functionally, (Microbial infection) Receptor for C.botulinum neurotoxin type F (BoNT/F); binding requires glycosylation of Asn-573. The protein is Synaptic vesicle glycoprotein 2C (Sv2c) of Rattus norvegicus (Rat).